The chain runs to 163 residues: Nucleotide-binding protein Cj0374 (163 aa).

It belongs to the YajQ family.

In terms of biological role, nucleotide-binding protein. The chain is Nucleotide-binding protein Cj0374 from Campylobacter jejuni subsp. jejuni serotype O:2 (strain ATCC 700819 / NCTC 11168).